The chain runs to 272 residues: Prohibitin 1 (272 aa).

A2 is modified (N-acetylalanine). A Phosphothreonine modification is found at T91. 2 positions are modified to N6-acetyllysine: K128 and K186. The stretch at 177–211 (KEFTEAVEAKQVAQQEAERARFVVEKAEQQKKAAI) forms a coiled coil. K202 bears the N6-acetyllysine; alternate mark. K202 carries the N6-succinyllysine; alternate modification. A Phosphotyrosine modification is found at Y249.

It belongs to the prohibitin family. In terms of assembly, interacts with PHB2. Interacts with STOML2. Interacts with CD86 (via cytoplasmic domain); the interactions increases after priming with CD40. (Microbial infection) Interacts with human enterovirus 71/EV-71 capsid protein VP0, protein 3CD and protease 3C. As to expression, widely expressed in different tissues.

It is found in the mitochondrion inner membrane. Its subcellular location is the nucleus. The protein localises to the cell membrane. It localises to the cytoplasm. Target of the anti-cancer drug Rocaglamide (Roc-A). Its function is as follows. Protein with pleiotropic attributes mediated in a cell-compartment- and tissue-specific manner, which include the plasma membrane-associated cell signaling functions, mitochondrial chaperone, and transcriptional co-regulator of transcription factors in the nucleus. Plays a role in adipose tissue and glucose homeostasis in a sex-specific manner. Contributes to pulmonary vascular remodeling by accelerating proliferation of pulmonary arterial smooth muscle cells. Functionally, in the mitochondria, together with PHB2, forms large ring complexes (prohibitin complexes) in the inner mitochondrial membrane (IMM) and functions as a chaperone protein that stabilizes mitochondrial respiratory enzymes and maintains mitochondrial integrity in the IMM, which is required for mitochondrial morphogenesis, neuronal survival, and normal lifespan. The prohibitin complex, with DNAJC19, regulates cardiolipin remodeling and the protein turnover of OMA1 in a cardiolipin-binding manner. Regulates mitochondrial respiration activity playing a role in cellular aging. The prohibitin complex plays a role of mitophagy receptor involved in targeting mitochondria for autophagic degradation. Involved in mitochondrial-mediated antiviral innate immunity, activates RIG-I-mediated signal transduction and production of IFNB1 and pro-inflammatory cytokine IL6. In the nucleus, acts as a transcription coregulator, enhances promoter binding by TP53, a transcription factor it activates, but reduces the promoter binding by E2F1, a transcription factor it represses. Interacts with STAT3 to affect IL17 secretion in T-helper Th17 cells. In terms of biological role, in the plasma membrane, cooperates with CD86 to mediate CD86-signaling in B lymphocytes that regulates the level of IgG1 produced through the activation of distal signaling intermediates. Upon CD40 engagement, required to activate NF-kappa-B signaling pathway via phospholipase C and protein kinase C activation. Its function is as follows. (Microbial infection) In neuronal cells, cell surface-expressed PHB1 is involved in human enterovirus 71/EV-71 entry into neuronal cells specifically, while membrane-bound mitochondrial PHB1 associates with the virus replication complex and facilitates viral replication. May serve as a receptor for EV71. The protein is Prohibitin 1 (Phb1) of Mus musculus (Mouse).